Consider the following 108-residue polypeptide: Probable endonuclease 4 (108 aa).

Histidine 2, histidine 36, aspartate 49, histidine 51, and glutamate 81 together coordinate Zn(2+).

Belongs to the AP endonuclease 2 family. Zn(2+) serves as cofactor.

The enzyme catalyses Endonucleolytic cleavage to 5'-phosphooligonucleotide end-products.. In terms of biological role, endonuclease IV plays a role in DNA repair. It cleaves phosphodiester bonds at apurinic or apyrimidinic (AP) sites, generating a 3'-hydroxyl group and a 5'-terminal sugar phosphate. The chain is Probable endonuclease 4 (nfo) from Thermotoga neapolitana.